Consider the following 85-residue polypeptide: LTGLFLAMHYTSDIATAFSSVAHICRDVNYGWLIRNIHANGASFFFICIYLHIGRGLYYGSYLYKETWNVGVVLLLLVMMTAFVG.

Helical transmembrane passes span 1-8, 32-53, and 68-85; these read LTGLFLAM, WLIR…YLHI, and WNVG…AFVG. Heme b is bound by residues H38 and H52.

Belongs to the cytochrome b family. The cytochrome bc1 complex contains 3 respiratory subunits (MT-CYB, CYC1 and UQCRFS1), 2 core proteins (UQCRC1 and UQCRC2) and probably 6 low-molecular weight proteins. Heme b serves as cofactor.

It is found in the mitochondrion inner membrane. In terms of biological role, component of the ubiquinol-cytochrome c reductase complex (complex III or cytochrome b-c1 complex) that is part of the mitochondrial respiratory chain. The b-c1 complex mediates electron transfer from ubiquinol to cytochrome c. Contributes to the generation of a proton gradient across the mitochondrial membrane that is then used for ATP synthesis. This Pomoxis nigromaculatus (Black crappie) protein is Cytochrome b (mt-cyb).